A 920-amino-acid chain; its full sequence is Isoleucine--tRNA ligase (920 aa).

The 'HIGH' region signature appears at Pro58–His68. Glu569 provides a ligand contact to L-isoleucyl-5'-AMP. Residues Lys610–Ser614 carry the 'KMSKS' region motif. Lys613 provides a ligand contact to ATP. Zn(2+)-binding residues include Cys895, Cys898, Cys910, and Cys913.

Belongs to the class-I aminoacyl-tRNA synthetase family. IleS type 1 subfamily. Monomer. Zn(2+) serves as cofactor.

Its subcellular location is the cytoplasm. The enzyme catalyses tRNA(Ile) + L-isoleucine + ATP = L-isoleucyl-tRNA(Ile) + AMP + diphosphate. In terms of biological role, catalyzes the attachment of isoleucine to tRNA(Ile). As IleRS can inadvertently accommodate and process structurally similar amino acids such as valine, to avoid such errors it has two additional distinct tRNA(Ile)-dependent editing activities. One activity is designated as 'pretransfer' editing and involves the hydrolysis of activated Val-AMP. The other activity is designated 'posttransfer' editing and involves deacylation of mischarged Val-tRNA(Ile). This is Isoleucine--tRNA ligase from Helicobacter pylori (strain P12).